A 941-amino-acid chain; its full sequence is Bifunctional uridylyltransferase/uridylyl-removing enzyme (941 aa).

Residues 1 to 372 (MAKHDLSDAT…RFAHRPRRIP (372 aa)) are uridylyltransferase. A uridylyl-removing region spans residues 373–728 (GTPEFIEDRG…VRTHSFHAIT (356 aa)). The region spanning 489-611 (VDEHLIRSVG…VQSLDRLRML (123 aa)) is the HD domain. 2 consecutive ACT domains span residues 729–810 (EITV…EVIA) and 840–919 (VIEI…LREQ). Positions 916 to 941 (LREQMPSGIIAPAATKSPAAEKKARV) are disordered.

Belongs to the GlnD family. Requires Mg(2+) as cofactor.

It catalyses the reaction [protein-PII]-L-tyrosine + UTP = [protein-PII]-uridylyl-L-tyrosine + diphosphate. The catalysed reaction is [protein-PII]-uridylyl-L-tyrosine + H2O = [protein-PII]-L-tyrosine + UMP + H(+). With respect to regulation, uridylyltransferase (UTase) activity is inhibited by glutamine, while glutamine activates uridylyl-removing (UR) activity. Functionally, modifies, by uridylylation and deuridylylation, the PII regulatory proteins (GlnB and homologs), in response to the nitrogen status of the cell that GlnD senses through the glutamine level. Under low glutamine levels, catalyzes the conversion of the PII proteins and UTP to PII-UMP and PPi, while under higher glutamine levels, GlnD hydrolyzes PII-UMP to PII and UMP (deuridylylation). Thus, controls uridylylation state and activity of the PII proteins, and plays an important role in the regulation of nitrogen assimilation and metabolism. The protein is Bifunctional uridylyltransferase/uridylyl-removing enzyme of Allorhizobium ampelinum (strain ATCC BAA-846 / DSM 112012 / S4) (Agrobacterium vitis (strain S4)).